Here is a 102-residue protein sequence, read N- to C-terminus: Large ribosomal subunit protein uL24 (102 aa).

This sequence belongs to the universal ribosomal protein uL24 family. Part of the 50S ribosomal subunit.

One of two assembly initiator proteins, it binds directly to the 5'-end of the 23S rRNA, where it nucleates assembly of the 50S subunit. In terms of biological role, one of the proteins that surrounds the polypeptide exit tunnel on the outside of the subunit. This is Large ribosomal subunit protein uL24 from Ralstonia nicotianae (strain ATCC BAA-1114 / GMI1000) (Ralstonia solanacearum).